A 1385-amino-acid chain; its full sequence is DNA-directed RNA polymerase subunit beta' (1385 aa).

Residues Cys75, Cys77, Cys90, and Cys93 each coordinate Zn(2+). Mg(2+) is bound by residues Asp466, Asp468, and Asp470. Zn(2+)-binding residues include Cys809, Cys883, Cys890, and Cys893.

Belongs to the RNA polymerase beta' chain family. As to quaternary structure, the RNAP catalytic core consists of 2 alpha, 1 beta, 1 beta' and 1 omega subunit. When a sigma factor is associated with the core the holoenzyme is formed, which can initiate transcription. Mg(2+) serves as cofactor. The cofactor is Zn(2+).

The enzyme catalyses RNA(n) + a ribonucleoside 5'-triphosphate = RNA(n+1) + diphosphate. DNA-dependent RNA polymerase catalyzes the transcription of DNA into RNA using the four ribonucleoside triphosphates as substrates. This Nitratidesulfovibrio vulgaris (strain ATCC 29579 / DSM 644 / CCUG 34227 / NCIMB 8303 / VKM B-1760 / Hildenborough) (Desulfovibrio vulgaris) protein is DNA-directed RNA polymerase subunit beta'.